Here is a 102-residue protein sequence, read N- to C-terminus: Small ribosomal subunit protein uS10 (102 aa).

This sequence belongs to the universal ribosomal protein uS10 family. Part of the 30S ribosomal subunit.

In terms of biological role, involved in the binding of tRNA to the ribosomes. This Halalkalibacterium halodurans (strain ATCC BAA-125 / DSM 18197 / FERM 7344 / JCM 9153 / C-125) (Bacillus halodurans) protein is Small ribosomal subunit protein uS10.